Here is a 567-residue protein sequence, read N- to C-terminus: Probable diguanylate cyclase DgcQ (567 aa).

A run of 2 helical transmembrane segments spans residues 20–40 and 357–377; these read FGPGHVVNTCFLIVMLFSTLL and IALTLLWGLFTAMLLISWGVI. The GGDEF domain occupies 425-560; it reads QPFSVIQLDL…GRNRICASDA (136 aa). Asp-433 contributes to the Mg(2+) binding site. Residues Asn-441, His-446, and Asp-450 each coordinate substrate. Residue Glu-476 participates in Mg(2+) binding. Glu-476 (proton acceptor) is an active-site residue.

As to quaternary structure, homodimer. It depends on Mg(2+) as a cofactor.

The protein resides in the cell inner membrane. It catalyses the reaction 2 GTP = 3',3'-c-di-GMP + 2 diphosphate. It functions in the pathway glycan metabolism; bacterial cellulose biosynthesis. It participates in purine metabolism; 3',5'-cyclic di-GMP biosynthesis. Its function is as follows. Catalyzes the synthesis of cyclic-di-GMP (c-di-GMP) via the condensation of 2 GTP molecules. Cyclic-di-GMP is a second messenger which controls cell surface-associated traits in bacteria. Involved in the regulation of cellulose production. In Salmonella typhi, this protein is Probable diguanylate cyclase DgcQ.